A 157-amino-acid polypeptide reads, in one-letter code: 2-C-methyl-D-erythritol 2,4-cyclodiphosphate synthase (157 aa).

A divalent metal cation contacts are provided by D8 and H10. Residues 8–10 (DVH) and 34–35 (HS) contribute to the 4-CDP-2-C-methyl-D-erythritol 2-phosphate site. H42 serves as a coordination point for a divalent metal cation. 4-CDP-2-C-methyl-D-erythritol 2-phosphate-binding positions include 56–58 (DIG), 132–135 (TTNE), and R142.

It belongs to the IspF family. Homotrimer. It depends on a divalent metal cation as a cofactor.

The catalysed reaction is 4-CDP-2-C-methyl-D-erythritol 2-phosphate = 2-C-methyl-D-erythritol 2,4-cyclic diphosphate + CMP. The protein operates within isoprenoid biosynthesis; isopentenyl diphosphate biosynthesis via DXP pathway; isopentenyl diphosphate from 1-deoxy-D-xylulose 5-phosphate: step 4/6. Functionally, involved in the biosynthesis of isopentenyl diphosphate (IPP) and dimethylallyl diphosphate (DMAPP), two major building blocks of isoprenoid compounds. Catalyzes the conversion of 4-diphosphocytidyl-2-C-methyl-D-erythritol 2-phosphate (CDP-ME2P) to 2-C-methyl-D-erythritol 2,4-cyclodiphosphate (ME-CPP) with a corresponding release of cytidine 5-monophosphate (CMP). This chain is 2-C-methyl-D-erythritol 2,4-cyclodiphosphate synthase, found in Chlorobaculum tepidum (strain ATCC 49652 / DSM 12025 / NBRC 103806 / TLS) (Chlorobium tepidum).